The following is a 375-amino-acid chain: Hydrogenase-1 small chain (375 aa).

Positions Met-1 to Ala-47 form a signal peptide, tat-type signal. Positions 64, 67, 162, 196, 234, 237, 262, and 268 each coordinate [4Fe-4S] cluster. Residues Cys-277, Cys-296, and Cys-299 each coordinate [3Fe-4S] cluster. Residues His-353–Ala-375 form a disordered region.

Belongs to the [NiFe]/[NiFeSe] hydrogenase small subunit family. As to quaternary structure, heterodimer of a large and a small subunit. [4Fe-4S] cluster serves as cofactor. It depends on [3Fe-4S] cluster as a cofactor. In terms of processing, predicted to be exported by the Tat system. The position of the signal peptide cleavage has not been experimentally proven.

The protein localises to the cell membrane. It catalyses the reaction H2 + A = AH2. The sequence is that of Hydrogenase-1 small chain (hyaA) from Citrobacter freundii.